The following is a 201-amino-acid chain: NADH-quinone oxidoreductase subunit C (201 aa).

It belongs to the complex I 30 kDa subunit family. As to quaternary structure, NDH-1 is composed of 14 different subunits. Subunits NuoB, C, D, E, F, and G constitute the peripheral sector of the complex.

The protein localises to the cell inner membrane. The catalysed reaction is a quinone + NADH + 5 H(+)(in) = a quinol + NAD(+) + 4 H(+)(out). NDH-1 shuttles electrons from NADH, via FMN and iron-sulfur (Fe-S) centers, to quinones in the respiratory chain. The immediate electron acceptor for the enzyme in this species is believed to be ubiquinone. Couples the redox reaction to proton translocation (for every two electrons transferred, four hydrogen ions are translocated across the cytoplasmic membrane), and thus conserves the redox energy in a proton gradient. The polypeptide is NADH-quinone oxidoreductase subunit C (Azoarcus sp. (strain BH72)).